The following is a 686-amino-acid chain: MATDPRQLLVTCALPYANGSIHLGHMLEHIQADIWVRYQRLRGNTVNFICADDAHGTPIMLKAQQMGITPEEMIAAVSEEHQKDFAGFDISFDNYHSTHSEENRELASHIYLELKKNGFISSRTISQLFDPEKEMFLPDRFVKGTCPKCKSEDQYGDNCDNCGETYSPTELINPKSAVSGATPVMKDSEHFFFDLPQFESMLKEWTRSGSLQNETANKMQEWFESGLQQWDISRDAPYFGFEIPGEKDKFFYVWLDAPVGYMASFKNLCDKRDDLNFDEYWKKDSTTELYHFIGKDIVYFHSLFWPAMLEGAGFRKPNNVFVHGYVTVNGAKMSKSKGTFIKASTYLNHLDPECLRYYYAAKLNSRIDDLDLNLEDFTQRVNADVVNKIVNLASRNAGFITKRFEGKLSAEFAEPELYNEFVAAAERIGQLYETREFSRAIREITALADKANQYIDEKAPWVLAKEEGKEKELQEVSSVGINLFRVLMAYLKPVMPELAARTEAFLNEELTWEAIATPLTDHEITKFKALFSRIDPKKVEAMIESSKEDAAAEAAAKEKAEAEKEQASQTELDKEPIADEIEFDAFSAVDMRIARIISCEEVPKANKLLKFQLDIGGETRQVFSGIKSAYKPEELEGKLTVMVANLKPRKMKFGMSEGMILAAGPGGSDLWILEPHEGAQPGMRVM.

Residues 15–25 carry the 'HIGH' region motif; sequence PYANGSIHLGH. Residues Cys-146, Cys-149, Cys-159, and Cys-162 each contribute to the Zn(2+) site. Residues 332 to 336 carry the 'KMSKS' region motif; it reads KMSKS. Lys-335 contacts ATP. The interval 550-571 is disordered; that stretch reads AAAEAAAKEKAEAEKEQASQTE. Residues 585 to 686 form the tRNA-binding domain; it reads AFSAVDMRIA…EGAQPGMRVM (102 aa).

This sequence belongs to the class-I aminoacyl-tRNA synthetase family. MetG type 1 subfamily. In terms of assembly, homodimer. Requires Zn(2+) as cofactor.

It is found in the cytoplasm. It catalyses the reaction tRNA(Met) + L-methionine + ATP = L-methionyl-tRNA(Met) + AMP + diphosphate. Functionally, is required not only for elongation of protein synthesis but also for the initiation of all mRNA translation through initiator tRNA(fMet) aminoacylation. The chain is Methionine--tRNA ligase from Vibrio atlanticus (strain LGP32) (Vibrio splendidus (strain Mel32)).